A 212-amino-acid polypeptide reads, in one-letter code: uncharacterized protein (212 aa).

3 residues coordinate S-adenosyl-L-methionine: Gly-53, Glu-74, and Asp-97.

Belongs to the methyltransferase superfamily. YrrT family.

Could be a S-adenosyl-L-methionine-dependent methyltransferase. This is an uncharacterized protein from Bacillus thuringiensis (strain Al Hakam).